The chain runs to 561 residues: Zinc finger protein 394 (561 aa).

The tract at residues 1–61 (MNSSLTAQRR…NYPAASPDPE (61 aa)) is disordered. Position 12 is a phosphoserine (Ser-12). Lys-40 participates in a covalent cross-link: Glycyl lysine isopeptide (Lys-Gly) (interchain with G-Cter in SUMO2). Residues 64–146 (RLHFRQLRYQ…AVVRALQRAL (83 aa)) enclose the SCAN box domain. One can recognise a KRAB domain in the interval 155–230 (VTFEDTAVSL…LQEAFQGKRP (76 aa)). The interval 182–201 (ESAQKDSGSTVPPSLESRVE) is disordered. Glycyl lysine isopeptide (Lys-Gly) (interchain with G-Cter in SUMO2) cross-links involve residues Lys-203 and Lys-228. Positions 231–285 (LFSKCGSTHEDRVEKQSGDPLPLKLENSPEAEGLNSISDVNKNGSIEGEDSKNNE) are disordered. The span at 237–247 (STHEDRVEKQS) shows a compositional bias: basic and acidic residues. Residue Lys-254 forms a Glycyl lysine isopeptide (Lys-Gly) (interchain with G-Cter in SUMO2) linkage. The span at 265 to 274 (NSISDVNKNG) shows a compositional bias: polar residues. A Glycyl lysine isopeptide (Lys-Gly) (interchain with G-Cter in SUMO2) cross-link involves residue Lys-282. 7 consecutive C2H2-type zinc fingers follow at residues 358–380 (YKCGNCGKSFKQRSDLFRHQRIH), 386–408 (YGCQECGKSFSQSAALTKHQRTH), 414–436 (YTCLKCGERFRQNSHLNRHQSTH), 442–463 (FKCEECGETCHISNLFRHQRLH), 469–491 (YKCEECEKSFKQRSDLFKHHRIH), 497–519 (YGCSVCGKRFNQSATLIKHQRIH), and 525–547 (YKCLECGERFRQSTHLIRHQRIH). A Glycyl lysine isopeptide (Lys-Gly) (interchain with G-Cter in SUMO2) cross-link involves residue Lys-443.

This sequence belongs to the krueppel C2H2-type zinc-finger protein family.

The protein localises to the nucleus. In terms of biological role, may be involved in transcriptional regulation. The protein is Zinc finger protein 394 (ZNF394) of Homo sapiens (Human).